The sequence spans 320 residues: Mas-related G-protein coupled receptor member D (320 aa).

The Extracellular segment spans residues 1-33 (MNQTLNSSGTAELALNHSRGSVVHAACLVLSSL). Asn-2, Asn-6, and Asn-16 each carry an N-linked (GlcNAc...) asparagine glycan. A helical transmembrane segment spans residues 34–54 (AMFTCLCGMAGNSMVIWLLGF). Over 55 to 62 (RMRRTPFS) the chain is Cytoplasmic. The chain crosses the membrane as a helical span at residues 63–83 (IYILNLAAADLLFVFCMAAML). The Extracellular segment spans residues 84-112 (SLETQPLVSTTDKVHELMKRLKYFAYTVG). The chain crosses the membrane as a helical span at residues 113 to 133 (LSLLTAISTQRCLSVLFPIWF). Residues 134–142 (KCHRPRHLS) lie on the Cytoplasmic side of the membrane. The helical transmembrane segment at 143–163 (AWVCALLWMLCLLTNGLTSCF) threads the bilayer. Over 164 to 182 (CSKFLKFNKDQCFRVDMVQ) the chain is Extracellular. Residues 183–203 (AALIMGVLTPVMTLSSLTLFV) traverse the membrane as a helical segment. Over 204-218 (RVRRSSQQWRRQPTR) the chain is Cytoplasmic. Residues 219–239 (LFVVVLASVLVFLICSLPLGF) form a helical membrane-spanning segment. Residues 240–257 (YWFVLYWLNLPPDTKVLY) lie on the Extracellular side of the membrane. Residues 258-280 (FNLSRLSSSMSSSANPLIYFLVG) traverse the membrane as a helical segment. Over 281–320 (SRRSRRLQGSLGTVLQRALREEPELEGGETPTTGTNEMGA) the chain is Cytoplasmic. The tract at residues 301–320 (EEPELEGGETPTTGTNEMGA) is disordered. Positions 308 to 320 (GETPTTGTNEMGA) are enriched in low complexity.

It belongs to the G-protein coupled receptor 1 family. Mas subfamily. Co-expressed in the small diameter neurons with P2X3 and VR1 in dorsal root ganglia.

Its subcellular location is the cell membrane. In terms of biological role, may regulate nociceptor function and/or development, including the sensation or modulation of pain. Functions as a specific membrane receptor for beta-alanine. The receptor couples with G-protein G(q) and G(i). The sequence is that of Mas-related G-protein coupled receptor member D (MRGPRD) from Macaca fascicularis (Crab-eating macaque).